The primary structure comprises 525 residues: GMP synthase [glutamine-hydrolyzing] (525 aa).

Residues 8–207 (KILILDFGSQ…ALDICQCEAN (200 aa)) enclose the Glutamine amidotransferase type-1 domain. Cys-85 (nucleophile) is an active-site residue. Catalysis depends on residues His-181 and Glu-183. Residues 208–400 (WKPSSIIEDA…LGLPYNMLYR (193 aa)) enclose the GMPS ATP-PPase domain. Position 235–241 (235–241 (SGGVDSS)) interacts with ATP.

As to quaternary structure, homodimer.

It carries out the reaction XMP + L-glutamine + ATP + H2O = GMP + L-glutamate + AMP + diphosphate + 2 H(+). The protein operates within purine metabolism; GMP biosynthesis; GMP from XMP (L-Gln route): step 1/1. Functionally, catalyzes the synthesis of GMP from XMP. This is GMP synthase [glutamine-hydrolyzing] from Shewanella loihica (strain ATCC BAA-1088 / PV-4).